We begin with the raw amino-acid sequence, 166 residues long: V-type proton ATPase subunit c4 (166 aa).

Residues 1–13 (MASSGFSGDETAP) lie on the Lumenal side of the membrane. Residues 14–34 (FFGFLGAAAALVFSCMGAAYG) traverse the membrane as a helical segment. Residues 35-56 (TAKSGVGVASMGVMRPELVMKS) lie on the Cytoplasmic side of the membrane. Residues 57-77 (IVPVVMAGVLGIYGLIIAVII) form a helical membrane-spanning segment. Residues 78–96 (STGINPKAKSYYLFDGYAH) are Lumenal-facing. Residues 97–118 (LSSGLACGLAGLSAGMAIGIVG) traverse the membrane as a helical segment. At 119–130 (DAGVRANAQQPK) the chain is on the cytoplasmic side. A helical transmembrane segment spans residues 131–156 (LFVGMILILIFAEALALYGLIVGIIL). Topologically, residues 157–166 (SSRAGQSRAE) are lumenal.

Belongs to the V-ATPase proteolipid subunit family. As to quaternary structure, V-ATPase is a heteromultimeric enzyme composed of a peripheral catalytic V1 complex (components A to H) attached to an integral membrane V0 proton pore complex (components: a, c, c'', d and e). The proteolipid components c and c'' are present as a hexameric ring that forms the proton-conducting pore. Interacts with APD2.

Its subcellular location is the vacuole membrane. In terms of biological role, proton-conducting pore forming subunit of the membrane integral V0 complex of vacuolar ATPase. V-ATPase is responsible for acidifying a variety of intracellular compartments in eukaryotic cells. The chain is V-type proton ATPase subunit c4 (VHA-c4) from Arabidopsis thaliana (Mouse-ear cress).